We begin with the raw amino-acid sequence, 396 residues long: Elongation factor Tu (396 aa).

Residues 10 to 206 (KPHVNVGTIG…ALDSYIPEPV (197 aa)) form the tr-type G domain. The segment at 19–26 (GHIDHGKT) is G1. 19–26 (GHIDHGKT) serves as a coordination point for GTP. Residue Thr26 participates in Mg(2+) binding. The G2 stretch occupies residues 60 to 64 (TKTVT). The tract at residues 83 to 86 (DCPG) is G3. Residues 83 to 87 (DCPGH) and 138 to 141 (NKCD) each bind GTP. Residues 138-141 (NKCD) are G4. Residues 176–178 (ASL) form a G5 region.

Belongs to the TRAFAC class translation factor GTPase superfamily. Classic translation factor GTPase family. EF-Tu/EF-1A subfamily. As to quaternary structure, monomer.

It localises to the cytoplasm. It catalyses the reaction GTP + H2O = GDP + phosphate + H(+). GTP hydrolase that promotes the GTP-dependent binding of aminoacyl-tRNA to the A-site of ribosomes during protein biosynthesis. This Sorangium cellulosum (strain So ce56) (Polyangium cellulosum (strain So ce56)) protein is Elongation factor Tu.